The primary structure comprises 91 residues: Small ribosomal subunit protein bS20 (91 aa).

The segment at 72–91 (KNAASRQKSRLAKKLNGLSA) is disordered.

The protein belongs to the bacterial ribosomal protein bS20 family.

Its function is as follows. Binds directly to 16S ribosomal RNA. The sequence is that of Small ribosomal subunit protein bS20 from Halalkalibacterium halodurans (strain ATCC BAA-125 / DSM 18197 / FERM 7344 / JCM 9153 / C-125) (Bacillus halodurans).